Consider the following 393-residue polypeptide: Digeranylgeranylglycerophospholipid reductase (393 aa).

FAD contacts are provided by Ala13, Asp32, Cys43, Ala44, Gly46, Arg95, Val119, Asp274, and Gly286. A 2,3-bis-O-(geranylgeranyl)-sn-glycerol 1-phospholipid contacts are provided by Lys327 and Gly363.

This sequence belongs to the geranylgeranyl reductase family. DGGGPL reductase subfamily. FAD serves as cofactor.

It carries out the reaction a 2,3-bis-O-phytanyl-sn-glycerol 1-phospholipid + 8 A = a 2,3-bis-O-(geranylgeranyl)-sn-glycerol 1-phospholipid + 8 AH2. It catalyses the reaction 2,3-bis-O-(phytanyl)-sn-glycerol 1-phosphate + 8 A = 2,3-bis-O-(geranylgeranyl)-sn-glycerol 1-phosphate + 8 AH2. The catalysed reaction is CDP-2,3-bis-O-(geranylgeranyl)-sn-glycerol + 8 AH2 = CDP-2,3-bis-O-(phytanyl)-sn-glycerol + 8 A. The enzyme catalyses archaetidylserine + 8 AH2 = 2,3-bis-O-phytanyl-sn-glycero-3-phospho-L-serine + 8 A. It participates in membrane lipid metabolism; glycerophospholipid metabolism. In terms of biological role, is involved in the reduction of 2,3-digeranylgeranylglycerophospholipids (unsaturated archaeols) into 2,3-diphytanylglycerophospholipids (saturated archaeols) in the biosynthesis of archaeal membrane lipids. Catalyzes the formation of archaetidic acid (2,3-di-O-phytanyl-sn-glyceryl phosphate) from 2,3-di-O-geranylgeranylglyceryl phosphate (DGGGP) via the hydrogenation of each double bond of the isoprenoid chains. Is also probably able to reduce double bonds of geranyl groups in CDP-2,3-bis-O-(geranylgeranyl)-sn-glycerol and archaetidylserine, thus acting at various stages in the biosynthesis of archaeal membrane lipids. The polypeptide is Digeranylgeranylglycerophospholipid reductase (Pyrococcus furiosus (strain ATCC 43587 / DSM 3638 / JCM 8422 / Vc1)).